A 583-amino-acid polypeptide reads, in one-letter code: Exonuclease 3'-5' domain-containing protein 2 (583 aa).

Over 1–11 (MTRESAVATKR) the chain is Mitochondrial intermembrane. The chain crosses the membrane as a helical span at residues 12 to 29 (NWAILAAGVGLVYVLVRH). Topologically, residues 30 to 583 (RHRLLCPLRR…AGLDAKIKET (554 aa)) are cytoplasmic. Positions 62-228 (TTQWVLNELK…AIYQKLCRDL (167 aa)) constitute a 3'-5' exonuclease domain. Positions 83, 85, and 213 each coordinate a divalent metal cation. The segment covering 266–281 (GSGVTRSKGSTQSKSN) has biased composition (polar residues). Residues 266–286 (GSGVTRSKGSTQSKSNKWVPK) are disordered.

Belongs to the EXD2 family. As to quaternary structure, homodimer. Mg(2+) is required as a cofactor. The cofactor is Mn(2+).

Its subcellular location is the mitochondrion membrane. Functionally, 3'-5' exoribonuclease required for mitochondrial metabolism. The protein is Exonuclease 3'-5' domain-containing protein 2 of Drosophila melanogaster (Fruit fly).